The chain runs to 271 residues: Small ribosomal subunit protein uS9m (271 aa).

The N-terminal 11 residues, 1–11, are a transit peptide targeting the mitochondrion; it reads MFRSLAKLRCF. Positions 251–271 are disordered; sequence KVERKKTGQPKARKKYTWVKR. Positions 252 to 271 are enriched in basic residues; it reads VERKKTGQPKARKKYTWVKR.

Belongs to the universal ribosomal protein uS9 family. As to quaternary structure, component of the mitochondrial small ribosomal subunit (mt-SSU). Mature yeast 74S mitochondrial ribosomes consist of a small (37S) and a large (54S) subunit. The 37S small subunit contains a 15S ribosomal RNA (15S mt-rRNA) and at least 32 different proteins. The 54S large subunit contains a 21S rRNA (21S mt-rRNA) and at least 45 different proteins.

It localises to the mitochondrion. Functionally, component of the mitochondrial ribosome (mitoribosome), a dedicated translation machinery responsible for the synthesis of mitochondrial genome-encoded proteins, including at least some of the essential transmembrane subunits of the mitochondrial respiratory chain. The mitoribosomes are attached to the mitochondrial inner membrane and translation products are cotranslationally integrated into the membrane. This Schizosaccharomyces pombe (strain 972 / ATCC 24843) (Fission yeast) protein is Small ribosomal subunit protein uS9m (mrps9).